We begin with the raw amino-acid sequence, 163 residues long: Ribosome maturation factor RimP (163 aa).

Belongs to the RimP family.

Its subcellular location is the cytoplasm. Functionally, required for maturation of 30S ribosomal subunits. The polypeptide is Ribosome maturation factor RimP (Streptococcus thermophilus (strain CNRZ 1066)).